Reading from the N-terminus, the 74-residue chain is Antimicrobial peptide HsAp2 (74 aa).

The N-terminal stretch at 1-21 is a signal peptide; that stretch reads MSRRLILILVLVAMLVKTMAG. Residues 22-33 constitute a propeptide that is removed on maturation; sequence MESKWVETTYEI. A Proline amide modification is found at proline 65. Residues 69 to 74 constitute a propeptide that is removed on maturation; the sequence is AISEQT.

This sequence belongs to the non-disulfide-bridged peptide (NDBP) superfamily. Medium-length antimicrobial peptide (group 3) family. In terms of tissue distribution, expressed by the venom gland.

It localises to the secreted. It is found in the target cell membrane. Its function is as follows. Possesses antimicrobial activity against both Gram-negative and Gram-positive bacteria, as well as against the fungus C.tropicalis. Also possesses a relatively high hemolytic activity. May act by disrupting the integrity of the bacterial cell membrane. This chain is Antimicrobial peptide HsAp2, found in Heterometrus spinifer (Asia giant forest scorpion).